The following is a 348-amino-acid chain: MMQVYHLSHIDLDGYACQLVSKQFFKNIQCYNANYGREVSARIYEILNAIAQSKESEFLILVSDLNLNLNEAEYLQDKIQEHRLQNKNIQIQLLDHHISGKEVAESFHWYFLDINRCATKIVYEFLKKHYAILEPKNTTWLEPLVEMVNSVDIWDTQGYGFELGKVCMRMINQSSELNRFMFDDENRNYKLKLLEEVKNYLFLENAPVAYDNDLFKLKKIALGGDPDAETMDNISSNAQTHLLSLKKHDCSVYYQDKKGFLSYSMGGISVLANLFLTQNPDFDFYMDVNAKGNVSLRANGNCDVCELSQMCFNGGGHRNASGGKIDGFRESFNYRDIKEQIEEIFNNA.

Mn(2+) serves as cofactor.

It carries out the reaction a nucleoside 3',5'-cyclic phosphate + H2O = a nucleoside 5'-phosphate + H(+). Its function is as follows. Hydrolyzes cAMP to 5'-AMP and cGMP to 5'-GMP. Does not show phosphohydrolase activity toward various phosphatidylcholine and phosphorylated sugars. This chain is 3',5'-cyclic-nucleotide phosphodiesterase, found in Helicobacter pylori (strain ATCC 700392 / 26695) (Campylobacter pylori).